A 568-amino-acid polypeptide reads, in one-letter code: K(+) efflux antiporter 5 (568 aa).

An N-terminal signal peptide occupies residues 1–20 (MARFAVIGLTFLLLLGTSLS). The segment at 59–78 (EFSENDSPEGSDGASFNSSV) is disordered. The next 12 membrane-spanning stretches (helical) occupy residues 154–174 (LISD…VFSC), 178–198 (PVIV…LKFI), 201–221 (MVQV…ALGL), 230–250 (VVGP…MFLC), 264–284 (GIFV…KFLV), 298–318 (IGIL…LPVL), 334–354 (LLLI…SFVP), 389–409 (LGLS…TTEF), 422–442 (NLFA…HFLW), 447–467 (ILLA…AVVV), 476–496 (ISFH…VLLS), and 510–530 (LLLL…FKLI).

The protein belongs to the monovalent cation:proton antiporter 2 (CPA2) transporter (TC 2.A.37) family. KEA (TC 2.A.37.1) subfamily. As to expression, expressed in roots, stems, leaves, flowers and silique.

It localises to the golgi apparatus membrane. Its subcellular location is the golgi apparatus. It is found in the trans-Golgi network membrane. The protein localises to the prevacuolar compartment membrane. The protein resides in the endomembrane system. It carries out the reaction K(+)(in) + H(+)(out) = K(+)(out) + H(+)(in). Electroneutral K(+)/H(+) efflux antiporter involved in K(+) homeostasis and osmotic adjustment. Together with KEA4 and KEA6, promotes growth and development, and facilitates endosomal pH and ions homeostasis, as well as salt tolerance (e.g. K(+), NaCl and LiCl), probably by supporting cell wall biosynthesis during rapid etiolated seedling growth. The chain is K(+) efflux antiporter 5 from Arabidopsis thaliana (Mouse-ear cress).